A 325-amino-acid chain; its full sequence is Diadenosine 5',5'''-P1,P4-tetraphosphate phosphorylase 2 (325 aa).

Substrate is bound by residues Lys53, 92–93 (NK), Asn148, and 154–157 (GSSQ). His161 serves as the catalytic Nucleophile. Substrate-binding positions include Gln163, 277 to 279 (NST), Met284, and Lys288.

The protein belongs to the ATP adenylyltransferase family. Monomer. A divalent metal cation is required as a cofactor.

It localises to the cytoplasm. It is found in the nucleus. It carries out the reaction ADP + ATP + H(+) = P(1),P(4)-bis(5'-adenosyl) tetraphosphate + phosphate. The enzyme catalyses sulfate + ADP + H(+) = adenosine 5'-phosphosulfate + phosphate. Its function is as follows. Ap4A phosphorylase catalyzes the phosphorolytic degradation of bis(5'-adenosyl) tetraphosphate (Ap4A) into ADP and ATP. Can also use other Np4N' nucleotides (where N and N' stand for A,C,G or U) as substrates, but prefers A-containing substrates. Cannot catalyze the reverse reaction. Additionally, this enzyme can also catalyze the phosphorolytic degradation of adenosine 5'-phosphosulfate (AMPS) into ADP and sulfate, the reversible exchange reaction between inorganic phosphate and the beta-phosphate of a nucleoside diphosphate (NDP), and the synthesis of Ap4A from AMPS plus ATP. In Saccharomyces cerevisiae (strain ATCC 204508 / S288c) (Baker's yeast), this protein is Diadenosine 5',5'''-P1,P4-tetraphosphate phosphorylase 2.